Consider the following 864-residue polypeptide: Probable LRR receptor-like serine/threonine-protein kinase At1g07550 (864 aa).

The N-terminal stretch at 1-23 (MDTCTRLLFAACATLSILHLVQS) is a signal peptide. Residues 24–507 (QNQQGFISLD…SCGTRFPTAA (484 aa)) lie on the Extracellular side of the membrane. 7 N-linked (GlcNAc...) asparagine glycosylation sites follow: N49, N229, N256, N289, N432, N445, and N464. 3 LRR repeats span residues 411-434 (RIVKLDLSSSGLNGVIPPSIQNLT), 435-457 (QLQELDLSQNNLTGKVPEFLAKM), and 459-480 (YLLVINLSGNKLSGLVPQALLD). Residues 508 to 528 (VAASVSAVAIIILVLVLIFVL) form a helical membrane-spanning segment. The Cytoplasmic segment spans residues 529 to 864 (RRRKPSAGKV…VDTEINPKAR (336 aa)). Position 551 is a phosphothreonine (T551). Residues 560–831 (NNFQVVIGKG…QVVHVLNECL (272 aa)) form the Protein kinase domain. ATP-binding positions include 566-574 (IGKGGFGVV) and K587. Y632 carries the phosphotyrosine modification. Residue D684 is the Proton acceptor of the active site. Phosphothreonine is present on residues T718 and T723. Phosphotyrosine is present on Y731.

It belongs to the protein kinase superfamily. Ser/Thr protein kinase family.

It is found in the membrane. The enzyme catalyses L-seryl-[protein] + ATP = O-phospho-L-seryl-[protein] + ADP + H(+). The catalysed reaction is L-threonyl-[protein] + ATP = O-phospho-L-threonyl-[protein] + ADP + H(+). The chain is Probable LRR receptor-like serine/threonine-protein kinase At1g07550 from Arabidopsis thaliana (Mouse-ear cress).